Consider the following 179-residue polypeptide: Large ribosomal subunit protein uL5 (179 aa).

Belongs to the universal ribosomal protein uL5 family. Part of the 50S ribosomal subunit; part of the 5S rRNA/L5/L18/L25 subcomplex. Contacts the 5S rRNA and the P site tRNA. Forms a bridge to the 30S subunit in the 70S ribosome.

Its function is as follows. This is one of the proteins that bind and probably mediate the attachment of the 5S RNA into the large ribosomal subunit, where it forms part of the central protuberance. In the 70S ribosome it contacts protein S13 of the 30S subunit (bridge B1b), connecting the 2 subunits; this bridge is implicated in subunit movement. Contacts the P site tRNA; the 5S rRNA and some of its associated proteins might help stabilize positioning of ribosome-bound tRNAs. This chain is Large ribosomal subunit protein uL5, found in Neisseria meningitidis serogroup A / serotype 4A (strain DSM 15465 / Z2491).